We begin with the raw amino-acid sequence, 264 residues long: MSKDRMVELLQEHFELNLYEARAYVALVAFGVLTPAELASVSEVPAPRTYDVLRSLEKKGFAMTQPGKTNKYRPVHPANVLEKFIQDWQERVKEELEAKKKAKEELLELMAPLIETEVPKYGVERVWVVRGIKNSTLKTKEMLEEAQNEILLADDGFIAVNLEDDIIKAVDRGVKTKILLTKNLLPRLKASKIIDYAKEGKLELRALDKFDLPMLICDEEVFFALEDLAARYFNYETQVWIKDHRVVALFKEKFNEYWEKAEKV.

Positions 33–54 (LTPAELASVSEVPAPRTYDVLR) form a DNA-binding region, H-T-H motif.

It belongs to the transcriptional regulator TrmB family.

Its function is as follows. Binds to the maltodextrin transport gene cluster (mdxE operon) promoter and to some other TGM (Thermococcales-Glycolytic-Motif) sequences, but not exclusively. This is Putative HTH-type transcriptional regulator TrmBL2 (trmBL2) from Pyrococcus furiosus (strain ATCC 43587 / DSM 3638 / JCM 8422 / Vc1).